The following is a 113-amino-acid chain: Urease subunit beta (113 aa).

The protein belongs to the urease beta subunit family. Heterotrimer of UreA (gamma), UreB (beta) and UreC (alpha) subunits. Three heterotrimers associate to form the active enzyme.

The protein localises to the cytoplasm. It catalyses the reaction urea + 2 H2O + H(+) = hydrogencarbonate + 2 NH4(+). The protein operates within nitrogen metabolism; urea degradation; CO(2) and NH(3) from urea (urease route): step 1/1. This chain is Urease subunit beta, found in Cyanothece sp. (strain PCC 7425 / ATCC 29141).